The following is a 431-amino-acid chain: Adenylosuccinate synthetase (431 aa).

GTP contacts are provided by residues 12–18 (GDEGKGK) and 40–42 (GHT). Residue Asp-13 is the Proton acceptor of the active site. Residues Asp-13 and Gly-40 each coordinate Mg(2+). IMP contacts are provided by residues 13–16 (DEGK), 38–41 (NAGH), Thr-131, Arg-145, Gln-225, Thr-240, and Arg-304. His-41 functions as the Proton donor in the catalytic mechanism. Substrate is bound at residue 300-306 (VNTGRRR). GTP-binding positions include Arg-306, 332-334 (KLD), and 414-416 (STS).

This sequence belongs to the adenylosuccinate synthetase family. In terms of assembly, homodimer. Mg(2+) serves as cofactor.

Its subcellular location is the cytoplasm. The enzyme catalyses IMP + L-aspartate + GTP = N(6)-(1,2-dicarboxyethyl)-AMP + GDP + phosphate + 2 H(+). Its pathway is purine metabolism; AMP biosynthesis via de novo pathway; AMP from IMP: step 1/2. Plays an important role in the de novo pathway of purine nucleotide biosynthesis. Catalyzes the first committed step in the biosynthesis of AMP from IMP. This is Adenylosuccinate synthetase from Beijerinckia indica subsp. indica (strain ATCC 9039 / DSM 1715 / NCIMB 8712).